Reading from the N-terminus, the 305-residue chain is Taste receptor type 2 member 13 (305 aa).

The Extracellular portion of the chain corresponds to 1–7 (MGSNVYG). A helical membrane pass occupies residues 8–28 (ILTMVMIAEFVFGNMSNGFIV). The Cytoplasmic portion of the chain corresponds to 29–43 (LINCIDWVRKGTLSS). Residues 44-64 (IGWILLFLAISRMVLIWEMLI) traverse the membrane as a helical segment. The Extracellular segment spans residues 65-88 (TWIKYMKYSFSFVTGTELRGIMFT). A helical membrane pass occupies residues 89–109 (WVISNHFSLWLATILSIFYLL). At 110-128 (KIASFSKPVFLYLKWREKK) the chain is on the cytoplasmic side. The chain crosses the membrane as a helical span at residues 129 to 149 (VLLIVLLGNLIFLMLNILQIN). The Extracellular segment spans residues 150 to 182 (KHIEHWMYQYERNITWSSRVSDFAGFSNLVLLE). Residue Asn-162 is glycosylated (N-linked (GlcNAc...) asparagine). The chain crosses the membrane as a helical span at residues 183–203 (MIVFSVTPFTVALVSFILLIF). The Cytoplasmic segment spans residues 204–232 (SLWKHLQKMHLNSRGERDPSTKAHVNALR). A helical transmembrane segment spans residues 233–253 (IMVSFLLLYATYFISFFLSLI). The Extracellular portion of the chain corresponds to 254 to 262 (PMAHKTRLG). The chain crosses the membrane as a helical span at residues 263-283 (LMFSITVGLFYPSSHSFILIL). At 284–305 (GHSNLRQASLWVMTYLKCGQKH) the chain is on the cytoplasmic side.

This sequence belongs to the G-protein coupled receptor T2R family.

It localises to the cell membrane. Receptor that may play a role in the perception of bitterness and is gustducin-linked. May play a role in sensing the chemical composition of the gastrointestinal content. The activity of this receptor may stimulate alpha gustducin, mediate PLC-beta-2 activation and lead to the gating of TRPM5. In Mus musculus (Mouse), this protein is Taste receptor type 2 member 13.